A 294-amino-acid chain; its full sequence is Small ribosomal subunit protein uS2 (294 aa).

Residues 232 to 245 (RAAEQDKAADDKAQ) show a composition bias toward basic and acidic residues. The interval 232 to 294 (RAAEQDKAAD…GSEEDGEAAN (63 aa)) is disordered. The span at 246-265 (EQAAAEAAKPEPAAPAPAAE) shows a compositional bias: low complexity.

Belongs to the universal ribosomal protein uS2 family.

In Desulfatibacillum aliphaticivorans, this protein is Small ribosomal subunit protein uS2.